The chain runs to 74 residues: Large ribosomal subunit protein bL31 (74 aa).

4 residues coordinate Zn(2+): Cys16, Cys18, Cys37, and Cys40.

Belongs to the bacterial ribosomal protein bL31 family. Type A subfamily. As to quaternary structure, part of the 50S ribosomal subunit. Requires Zn(2+) as cofactor.

Functionally, binds the 23S rRNA. In Koribacter versatilis (strain Ellin345), this protein is Large ribosomal subunit protein bL31.